We begin with the raw amino-acid sequence, 223 residues long: Cytidylate kinase (223 aa).

10–18 (GPASSGKST) serves as a coordination point for ATP.

This sequence belongs to the cytidylate kinase family. Type 1 subfamily.

It is found in the cytoplasm. It catalyses the reaction CMP + ATP = CDP + ADP. The enzyme catalyses dCMP + ATP = dCDP + ADP. This chain is Cytidylate kinase, found in Streptococcus pneumoniae serotype 4 (strain ATCC BAA-334 / TIGR4).